Here is a 491-residue protein sequence, read N- to C-terminus: Glycogen synthase 2 (491 aa).

An ADP-alpha-D-glucose-binding site is contributed by Lys-16.

This sequence belongs to the glycosyltransferase 1 family. Bacterial/plant glycogen synthase subfamily.

It carries out the reaction [(1-&gt;4)-alpha-D-glucosyl](n) + ADP-alpha-D-glucose = [(1-&gt;4)-alpha-D-glucosyl](n+1) + ADP + H(+). The protein operates within glycan biosynthesis; glycogen biosynthesis. Its function is as follows. Synthesizes alpha-1,4-glucan chains using ADP-glucose. The protein is Glycogen synthase 2 of Nitrosococcus oceani (strain ATCC 19707 / BCRC 17464 / JCM 30415 / NCIMB 11848 / C-107).